Reading from the N-terminus, the 374-residue chain is Chaperone protein DnaJ (374 aa).

Residues 5–70 form the J domain; it reads CYYEILNVSK…GKRSRYDQFG (66 aa). The CR-type zinc finger occupies 130-207; that stretch reads GVEKEINIPR…CYGSGKIKKQ (78 aa). Positions 143, 146, 159, 162, 181, 184, 195, and 198 each coordinate Zn(2+). 4 CXXCXGXG motif repeats span residues 143–150, 159–166, 181–188, and 195–202; these read CDSCDGTG, CHACHGQG, CPVCNGTG, and CDDCYGSG.

This sequence belongs to the DnaJ family. Homodimer. Zn(2+) is required as a cofactor.

The protein localises to the cytoplasm. Functionally, participates actively in the response to hyperosmotic and heat shock by preventing the aggregation of stress-denatured proteins and by disaggregating proteins, also in an autonomous, DnaK-independent fashion. Unfolded proteins bind initially to DnaJ; upon interaction with the DnaJ-bound protein, DnaK hydrolyzes its bound ATP, resulting in the formation of a stable complex. GrpE releases ADP from DnaK; ATP binding to DnaK triggers the release of the substrate protein, thus completing the reaction cycle. Several rounds of ATP-dependent interactions between DnaJ, DnaK and GrpE are required for fully efficient folding. Also involved, together with DnaK and GrpE, in the DNA replication of plasmids through activation of initiation proteins. This chain is Chaperone protein DnaJ, found in Francisella philomiragia subsp. philomiragia (strain ATCC 25017 / CCUG 19701 / FSC 153 / O#319-036).